Reading from the N-terminus, the 818-residue chain is Beta-glucosidase (818 aa).

The active site involves Asp-222. The 153-residue stretch at 386-538 folds into the PA14 domain; it reads VFSGEMTVEY…GDAGIAEAVE (153 aa).

Belongs to the glycosyl hydrolase 3 family.

The protein localises to the cytoplasm. The catalysed reaction is Hydrolysis of terminal, non-reducing beta-D-glucosyl residues with release of beta-D-glucose.. Involved in modifying a vir-inducing plant signal molecule. Hydrolyzes coniferin but not cellobiose. This Rhizobium radiobacter (Agrobacterium tumefaciens) protein is Beta-glucosidase (cbg-1).